A 57-amino-acid polypeptide reads, in one-letter code: Preprotein translocase subunit SecG (57 aa).

Residues 1 to 33 lie on the Cytoplasmic side of the membrane; it reads MARRRKYEGLNPFVAAGLIKFSEEGELERIKLN. Residues 34–55 form a helical membrane-spanning segment; it reads PRTAILVSITVIIAILVLNILH. At 56–57 the chain is on the extracellular side; sequence PL.

Belongs to the SEC61-beta family. As to quaternary structure, component of the protein translocase complex. Heterotrimer consisting of alpha (SecY), beta (SecG) and gamma (SecE) subunits. Can form oligomers of the heterotrimer.

Its subcellular location is the cell membrane. In terms of biological role, involved in protein export. The function of the beta subunit is unknown, but it may be involved in stabilization of the trimeric complex. This chain is Preprotein translocase subunit SecG, found in Pyrobaculum islandicum (strain DSM 4184 / JCM 9189 / GEO3).